A 235-amino-acid polypeptide reads, in one-letter code: Pyridoxine 5'-phosphate synthase (235 aa).

Asn-6 lines the 3-amino-2-oxopropyl phosphate pocket. Residue 8 to 9 participates in 1-deoxy-D-xylulose 5-phosphate binding; the sequence is DH. Arg-17 is a 3-amino-2-oxopropyl phosphate binding site. His-42 functions as the Proton acceptor in the catalytic mechanism. 1-deoxy-D-xylulose 5-phosphate-binding residues include Arg-44 and His-49. The active-site Proton acceptor is Glu-69. Thr-99 is a 1-deoxy-D-xylulose 5-phosphate binding site. His-188 serves as the catalytic Proton donor. Residues Gly-189 and 210–211 contribute to the 3-amino-2-oxopropyl phosphate site; that span reads GH.

It belongs to the PNP synthase family. Homooctamer; tetramer of dimers.

The protein resides in the cytoplasm. The enzyme catalyses 3-amino-2-oxopropyl phosphate + 1-deoxy-D-xylulose 5-phosphate = pyridoxine 5'-phosphate + phosphate + 2 H2O + H(+). It functions in the pathway cofactor biosynthesis; pyridoxine 5'-phosphate biosynthesis; pyridoxine 5'-phosphate from D-erythrose 4-phosphate: step 5/5. Catalyzes the complicated ring closure reaction between the two acyclic compounds 1-deoxy-D-xylulose-5-phosphate (DXP) and 3-amino-2-oxopropyl phosphate (1-amino-acetone-3-phosphate or AAP) to form pyridoxine 5'-phosphate (PNP) and inorganic phosphate. In Wolbachia pipientis subsp. Culex pipiens (strain wPip), this protein is Pyridoxine 5'-phosphate synthase.